Here is a 569-residue protein sequence, read N- to C-terminus: Proline--tRNA ligase (569 aa).

The protein belongs to the class-II aminoacyl-tRNA synthetase family. ProS type 1 subfamily. As to quaternary structure, homodimer.

The protein localises to the cytoplasm. It catalyses the reaction tRNA(Pro) + L-proline + ATP = L-prolyl-tRNA(Pro) + AMP + diphosphate. In terms of biological role, catalyzes the attachment of proline to tRNA(Pro) in a two-step reaction: proline is first activated by ATP to form Pro-AMP and then transferred to the acceptor end of tRNA(Pro). As ProRS can inadvertently accommodate and process non-cognate amino acids such as alanine and cysteine, to avoid such errors it has two additional distinct editing activities against alanine. One activity is designated as 'pretransfer' editing and involves the tRNA(Pro)-independent hydrolysis of activated Ala-AMP. The other activity is designated 'posttransfer' editing and involves deacylation of mischarged Ala-tRNA(Pro). The misacylated Cys-tRNA(Pro) is not edited by ProRS. In Halalkalibacterium halodurans (strain ATCC BAA-125 / DSM 18197 / FERM 7344 / JCM 9153 / C-125) (Bacillus halodurans), this protein is Proline--tRNA ligase.